Here is a 241-residue protein sequence, read N- to C-terminus: Small ribosomal subunit protein uS2 (241 aa).

This sequence belongs to the universal ribosomal protein uS2 family.

In Buchnera aphidicola subsp. Cinara cedri (strain Cc), this protein is Small ribosomal subunit protein uS2.